Reading from the N-terminus, the 233-residue chain is Sugar fermentation stimulation protein homolog (233 aa).

It belongs to the SfsA family.

This is Sugar fermentation stimulation protein homolog from Rhodospirillum centenum (strain ATCC 51521 / SW).